Consider the following 211-residue polypeptide: Large ribosomal subunit protein uL4 (211 aa).

The disordered stretch occupies residues 42–73; the sequence is NNRQGTHSTKDRSEVRGGGIKPWAQKGTGRAR.

It belongs to the universal ribosomal protein uL4 family. In terms of assembly, part of the 50S ribosomal subunit.

In terms of biological role, one of the primary rRNA binding proteins, this protein initially binds near the 5'-end of the 23S rRNA. It is important during the early stages of 50S assembly. It makes multiple contacts with different domains of the 23S rRNA in the assembled 50S subunit and ribosome. Forms part of the polypeptide exit tunnel. The sequence is that of Large ribosomal subunit protein uL4 from Leptospira biflexa serovar Patoc (strain Patoc 1 / Ames).